Consider the following 241-residue polypeptide: Uridylate kinase (241 aa).

12-15 serves as a coordination point for ATP; sequence KLSG. Residue glycine 54 coordinates UMP. ATP is bound by residues glycine 55 and arginine 59. Residues aspartate 74 and 135–142 each bind UMP; that span reads VGAPYFTT. 3 residues coordinate ATP: threonine 162, tyrosine 168, and aspartate 171.

This sequence belongs to the UMP kinase family. In terms of assembly, homohexamer.

It is found in the cytoplasm. The catalysed reaction is UMP + ATP = UDP + ADP. Its pathway is pyrimidine metabolism; CTP biosynthesis via de novo pathway; UDP from UMP (UMPK route): step 1/1. With respect to regulation, inhibited by UTP. In terms of biological role, catalyzes the reversible phosphorylation of UMP to UDP. The sequence is that of Uridylate kinase from Sphingopyxis alaskensis (strain DSM 13593 / LMG 18877 / RB2256) (Sphingomonas alaskensis).